The chain runs to 855 residues: Sucrose synthase 5 (855 aa).

The tract at residues 279–758 (SIFNIVIFSI…GLQRICECYT (480 aa)) is GT-B glycosyltransferase.

It belongs to the glycosyltransferase 1 family. Plant sucrose synthase subfamily. In terms of tissue distribution, predominantly expressed in roots, flowers and immature seeds.

It localises to the cytoplasm. It is found in the membrane. The catalysed reaction is an NDP-alpha-D-glucose + D-fructose = a ribonucleoside 5'-diphosphate + sucrose + H(+). Functionally, sucrose-cleaving enzyme that provides UDP-glucose and fructose for various metabolic pathways. The polypeptide is Sucrose synthase 5 (SUS5) (Oryza sativa subsp. japonica (Rice)).